Reading from the N-terminus, the 119-residue chain is Ribonuclease P protein component (119 aa).

Belongs to the RnpA family. Consists of a catalytic RNA component (M1 or rnpB) and a protein subunit.

It catalyses the reaction Endonucleolytic cleavage of RNA, removing 5'-extranucleotides from tRNA precursor.. Functionally, RNaseP catalyzes the removal of the 5'-leader sequence from pre-tRNA to produce the mature 5'-terminus. It can also cleave other RNA substrates such as 4.5S RNA. The protein component plays an auxiliary but essential role in vivo by binding to the 5'-leader sequence and broadening the substrate specificity of the ribozyme. In Cronobacter sakazakii (strain ATCC BAA-894) (Enterobacter sakazakii), this protein is Ribonuclease P protein component.